The following is a 405-amino-acid chain: Interferon alpha/beta receptor 1a (405 aa).

An N-terminal signal peptide occupies residues 1-20; it reads MKVGFALVLLWSLPITNVLA. The Extracellular portion of the chain corresponds to 21–233; sequence ELPQPQNLTL…QTEGDTPYGQ (213 aa). Fibronectin type-III domains are found at residues 22–123 and 126–228; these read LPQP…IDAS and PPSR…TEGD. N-linked (GlcNAc...) asparagine glycans are attached at residues Asn-27 and Asn-70. 2 disulfides stabilise this stretch: Cys-75-Cys-83 and Cys-201-Cys-222. The N-linked (GlcNAc...) asparagine glycan is linked to Asn-212. Residues 234 to 254 traverse the membrane as a helical segment; the sequence is IFLYFLVSMMVCFLLVLLSSY. The Cytoplasmic segment spans residues 255–405; that stretch reads AFFRFYRGLK…LDEGVVDICV (151 aa). Residues 325 to 374 are disordered; sequence TAPPSELEQDSGRRIRQDSGDSGIYSTEGGSAQQGRSGGEPIRRDQEVDS. The segment covering 334–343 has biased composition (basic and acidic residues); that stretch reads DSGRRIRQDS. Positions 348-359 are enriched in polar residues; sequence IYSTEGGSAQQG.

The protein belongs to the type II cytokine receptor family. As to quaternary structure, heterodimer with IFNAR2; forming the receptor for type I interferon.

The protein localises to the cell membrane. Together with IFNAR2, forms the heterodimeric receptor for type I interferons (including interferons alpha, beta, epsilon, omega and kappa). Type I interferon binding activates the JAK-STAT signaling cascade, resulting in transcriptional activation or repression of interferon-regulated genes that encode the effectors of the interferon response. Mechanistically, type I interferon-binding brings the IFNAR1 and IFNAR2 subunits into close proximity with one another, driving their associated Janus kinases (JAKs) (TYK2 bound to IFNAR1 and JAK1 bound to IFNAR2) to cross-phosphorylate one another. The activated kinases phosphorylate specific tyrosine residues on the intracellular domains of IFNAR1 and IFNAR2, forming docking sites for the STAT transcription factors. STAT proteins are then phosphorylated by the JAKs, promoting their translocation into the nucleus to regulate expression of interferon-regulated genes. This is Interferon alpha/beta receptor 1a from Oncorhynchus mykiss (Rainbow trout).